The following is a 145-amino-acid chain: NADH dehydrogenase [ubiquinone] 1 alpha subcomplex subunit 12 (145 aa).

At Met-1 the chain carries N-acetylmethionine.

This sequence belongs to the complex I NDUFA12 subunit family. Complex I is composed of 45 different subunits.

Its subcellular location is the mitochondrion inner membrane. Its function is as follows. Accessory subunit of the mitochondrial membrane respiratory chain NADH dehydrogenase (Complex I), that is believed not to be involved in catalysis. Complex I functions in the transfer of electrons from NADH to the respiratory chain. The immediate electron acceptor for the enzyme is believed to be ubiquinone. The sequence is that of NADH dehydrogenase [ubiquinone] 1 alpha subcomplex subunit 12 (NDUFA12) from Bos taurus (Bovine).